The sequence spans 102 residues: Large ribosomal subunit protein bL21 (102 aa).

This sequence belongs to the bacterial ribosomal protein bL21 family. In terms of assembly, part of the 50S ribosomal subunit. Contacts protein L20.

Its function is as follows. This protein binds to 23S rRNA in the presence of protein L20. This Campylobacter lari (strain RM2100 / D67 / ATCC BAA-1060) protein is Large ribosomal subunit protein bL21.